The following is a 276-amino-acid chain: Ribosomal RNA small subunit methyltransferase A (276 aa).

S-adenosyl-L-methionine is bound by residues Asn-28, Leu-30, Gly-55, Glu-77, Asp-103, and Asn-124.

It belongs to the class I-like SAM-binding methyltransferase superfamily. rRNA adenine N(6)-methyltransferase family. RsmA subfamily.

The protein localises to the cytoplasm. The enzyme catalyses adenosine(1518)/adenosine(1519) in 16S rRNA + 4 S-adenosyl-L-methionine = N(6)-dimethyladenosine(1518)/N(6)-dimethyladenosine(1519) in 16S rRNA + 4 S-adenosyl-L-homocysteine + 4 H(+). Specifically dimethylates two adjacent adenosines (A1518 and A1519) in the loop of a conserved hairpin near the 3'-end of 16S rRNA in the 30S particle. May play a critical role in biogenesis of 30S subunits. This is Ribosomal RNA small subunit methyltransferase A from Agrobacterium fabrum (strain C58 / ATCC 33970) (Agrobacterium tumefaciens (strain C58)).